Here is a 161-residue protein sequence, read N- to C-terminus: Nucleotide-binding protein Bcep1808_2648 (161 aa).

This sequence belongs to the YajQ family.

Functionally, nucleotide-binding protein. The protein is Nucleotide-binding protein Bcep1808_2648 of Burkholderia vietnamiensis (strain G4 / LMG 22486) (Burkholderia cepacia (strain R1808)).